Here is an 85-residue protein sequence, read N- to C-terminus: CDC42 small effector protein 2 (85 aa).

Residues cysteine 10 and cysteine 11 are each lipidated (S-palmitoyl cysteine). The region spanning 29-42 is the CRIB domain; the sequence is IGEPTNFVHTAHVG.

The protein belongs to the CDC42SE/SPEC family.

The protein resides in the cytoplasm. Its subcellular location is the cytoskeleton. It is found in the cell membrane. In terms of biological role, probably involved in the organization of the actin cytoskeleton by acting downstream of CDC42, inducing actin filament assembly. The polypeptide is CDC42 small effector protein 2 (cdc42se2) (Danio rerio (Zebrafish)).